Consider the following 565-residue polypeptide: Periplasmic trehalase (565 aa).

A signal peptide spans Met1 to Ala30. Substrate contacts are provided by residues Arg152, Trp159–Asp160, Asn196, Arg205–Gln207, Arg277–Glu279, and Gly310. Catalysis depends on proton donor/acceptor residues Asp312 and Glu496. Glu511 contributes to the substrate binding site. The interval Pro538–Pro565 is disordered. A compositionally biased stretch (polar residues) spans Thr548–Pro565.

This sequence belongs to the glycosyl hydrolase 37 family. As to quaternary structure, monomer.

It localises to the periplasm. It catalyses the reaction alpha,alpha-trehalose + H2O = alpha-D-glucose + beta-D-glucose. Provides the cells with the ability to utilize trehalose at high osmolarity by splitting it into glucose molecules that can subsequently be taken up by the phosphotransferase-mediated uptake system. This chain is Periplasmic trehalase, found in Escherichia coli O8 (strain IAI1).